The chain runs to 240 residues: MKNKSVEMLIEGAKEWGIFLEMFHVEHFQKYYALLLEWNQKMNLTAITEESEVVIKHFLDSLSVVKSGKIKEEEKIIDVGTGAGFPCIPLKIVFPKLKATLLDSSKKRITFLEEVINKLGINEIELIHGRAEDIGKDIKYREQFDLSMARAVAPLNILLEYTLPFVKVDGYFIALKGREIEEEIENSQRALKELKGEIEEVKEIKLPYSDIVHHLVIIKKIDNCPTKYPRRANAIQRSPL.

S-adenosyl-L-methionine is bound by residues glycine 80, phenylalanine 85, 103–105 (DSS), 131–132 (AE), and arginine 150.

Belongs to the methyltransferase superfamily. RNA methyltransferase RsmG family.

It is found in the cytoplasm. In terms of biological role, specifically methylates the N7 position of a guanine in 16S rRNA. In Thermoanaerobacter pseudethanolicus (strain ATCC 33223 / 39E) (Clostridium thermohydrosulfuricum), this protein is Ribosomal RNA small subunit methyltransferase G.